A 256-amino-acid polypeptide reads, in one-letter code: L-rhamnose 1-dehydrogenase (NAD(P)(+)) (256 aa).

NADP(+) contacts are provided by G12, S14, R15, I17, S37, D66, A67, and N93. The active-site Proton donor is S146. Residues S146, S148, Q156, and Y159 each coordinate beta-L-rhamnose. NADP(+)-binding residues include Y159 and K163. Y159 (proton acceptor) is an active-site residue. The Lowers pKa of active site Tyr role is filled by K163. T191 provides a ligand contact to beta-L-rhamnose. I192 serves as a coordination point for NADP(+). Position 197 (N197) interacts with beta-L-rhamnose.

Belongs to the short-chain dehydrogenases/reductases (SDR) family.

The enzyme catalyses L-rhamnofuranose + NAD(+) = L-rhamnono-1,4-lactone + NADH + H(+). It carries out the reaction L-rhamnofuranose + NADP(+) = L-rhamnono-1,4-lactone + NADPH + H(+). It functions in the pathway carbohydrate degradation; L-rhamnose degradation. In terms of biological role, NAD(P)-dependent dehydrogenase that catalyzes the oxidation of L-rhamnose to L-rhamnono-1,4-lactone. Also shows high activity with L-lyxose and low activity with L-mannose and L-fucose. Can utilize either NAD(+) or NADP(+), with a strong preference for NADP(+). Catalyzes the first step in an alternative pathway for rhamnose utilization that does not involve phosphorylated intermediates. The chain is L-rhamnose 1-dehydrogenase (NAD(P)(+)) from Azotobacter vinelandii (strain DJ / ATCC BAA-1303).